Consider the following 276-residue polypeptide: Sulfur carrier protein FdhD (276 aa).

The active-site Cysteine persulfide intermediate is the C120.

Belongs to the FdhD family.

It is found in the cytoplasm. Required for formate dehydrogenase (FDH) activity. Acts as a sulfur carrier protein that transfers sulfur from IscS to the molybdenum cofactor prior to its insertion into FDH. This chain is Sulfur carrier protein FdhD, found in Bordetella parapertussis (strain 12822 / ATCC BAA-587 / NCTC 13253).